The chain runs to 390 residues: Mannitol-1-phosphate 5-dehydrogenase (390 aa).

7-18 is an NAD(+) binding site; sequence AVHFGGGNIGRG. The active site involves K216.

This sequence belongs to the mannitol dehydrogenase family. As to quaternary structure, monomer.

It catalyses the reaction D-mannitol 1-phosphate + NAD(+) = beta-D-fructose 6-phosphate + NADH + H(+). In terms of biological role, catalyzes the NAD(H)-dependent interconversion of D-fructose 6-phosphate and D-mannitol 1-phosphate in the mannitol metabolic pathway. Has a strong preference for NADH over NADPH. The protein is Mannitol-1-phosphate 5-dehydrogenase of Alternaria alternata (Alternaria rot fungus).